A 121-amino-acid polypeptide reads, in one-letter code: Large ribosomal subunit protein bL20 (121 aa).

This sequence belongs to the bacterial ribosomal protein bL20 family.

Its function is as follows. Binds directly to 23S ribosomal RNA and is necessary for the in vitro assembly process of the 50S ribosomal subunit. It is not involved in the protein synthesizing functions of that subunit. This Orientia tsutsugamushi (strain Ikeda) (Rickettsia tsutsugamushi) protein is Large ribosomal subunit protein bL20.